Here is a 180-residue protein sequence, read N- to C-terminus: Acireductone dioxygenase (180 aa).

Fe(2+) contacts are provided by H97, H99, E103, and H141. Residues H97, H99, E103, and H141 each contribute to the Ni(2+) site.

Belongs to the acireductone dioxygenase (ARD) family. In terms of assembly, monomer. Requires Fe(2+) as cofactor. It depends on Mg(2+) as a cofactor. Ni(2+) is required as a cofactor. The cofactor is Mn(2+). Co(2+) serves as cofactor.

It carries out the reaction 1,2-dihydroxy-5-(methylsulfanyl)pent-1-en-3-one + O2 = 3-(methylsulfanyl)propanoate + CO + formate + 2 H(+). The enzyme catalyses 1,2-dihydroxy-5-(methylsulfanyl)pent-1-en-3-one + O2 = 4-methylsulfanyl-2-oxobutanoate + formate + 2 H(+). It functions in the pathway amino-acid biosynthesis; L-methionine biosynthesis via salvage pathway; L-methionine from S-methyl-5-thio-alpha-D-ribose 1-phosphate: step 5/6. In terms of biological role, catalyzes 2 different reactions between oxygen and the acireductone 1,2-dihydroxy-3-keto-5-methylthiopentene (DHK-MTPene) depending upon the metal bound in the active site. Fe-containing acireductone dioxygenase (Fe-ARD) produces formate and 2-keto-4-methylthiobutyrate (KMTB), the alpha-ketoacid precursor of methionine in the methionine recycle pathway. Ni-containing acireductone dioxygenase (Ni-ARD) produces methylthiopropionate, carbon monoxide and formate, and does not lie on the methionine recycle pathway. This is Acireductone dioxygenase (mtnD) from Klebsiella oxytoca.